The chain runs to 93 residues: Large ribosomal subunit protein eL31 (93 aa).

It belongs to the eukaryotic ribosomal protein eL31 family.

The polypeptide is Large ribosomal subunit protein eL31 (Methanosarcina mazei (strain ATCC BAA-159 / DSM 3647 / Goe1 / Go1 / JCM 11833 / OCM 88) (Methanosarcina frisia)).